A 282-amino-acid polypeptide reads, in one-letter code: Hepatitis A virus cellular receptor 2 homolog (282 aa).

An N-terminal signal peptide occupies residues 1–21; it reads MFSWLPFSCALLLLQPLPARS. Residues 22 to 131 enclose the Ig-like V-type domain; sequence LENAYTAEVG…EKLELKLSIT (110 aa). The Extracellular segment spans residues 22–194; it reads LENAYTAEVG…KDSGETIRTA (173 aa). 3 disulfide bridges follow: Cys38/Cys111, Cys52/Cys63, and Cys58/Cys110. Gln62 is a binding site for a 1,2-diacyl-sn-glycero-3-phospho-L-serine. N-linked (GlcNAc...) asparagine glycosylation is found at Asn74 and Asn100. Position 112 (Arg112) interacts with a 1,2-diacyl-sn-glycero-3-phospho-L-serine. Residues Phe115 and Gly117 each contribute to the Ca(2+) site. A 1,2-diacyl-sn-glycero-3-phospho-L-serine is bound at residue Met119. Ca(2+) is bound at residue Asn120. The interval 138–163 is disordered; the sequence is PAGTAHGDSTTASPRTLTTEGSGSET. Residues 144-163 show a composition bias toward polar residues; it reads GDSTTASPRTLTTEGSGSET. The O-linked (GalNAc...) threonine glycan is linked to Thr147. The N-linked (GlcNAc...) asparagine glycan is linked to Asn173. A helical transmembrane segment spans residues 195 to 215; the sequence is VHIGVGVSAGLALALILGVLI. Topologically, residues 216–282 are cytoplasmic; the sequence is LKWYSSKKKK…YCYVSSQQPS (67 aa). The interval 253 to 271 is interaction with BAG6; it reads EENIYTIEENIYEMENSNE. A Phosphotyrosine; by ITK modification is found at Tyr257.

It belongs to the immunoglobulin superfamily. TIM family. Interacts with HMGB1; impairs HMGB1 binding to B-DNA and likely HMGB1-mediated innate immune response. Interacts with BAG6. Interacts (phosphorylated) with PIK3R1 and PIK3R2. Interacts (not dependent on its phosphorylation status) with FYN. Interacts (in basal state T-cells) with VAV1; AKT1/2, LCP2, ZAP70, SYK, PIK3R1, FYN, SH3BP2 and SH2D2A. Interacts (in activated T-cells) with LCK and PLCG. Interacts with ILF3; this interaction promotes ILF3 ubiquitination and degradation.

It localises to the membrane. It is found in the cell junction. In terms of biological role, cell surface receptor implicated in modulating innate and adaptive immune responses. Generally accepted to have an inhibiting function. Reports on stimulating functions suggest that the activity may be influenced by the cellular context and/or the respective ligand. Regulates macrophage activation. Inhibits T-helper type 1 lymphocyte (Th1)-mediated auto- and alloimmune responses and promotes immunological tolerance. In CD8+ cells attenuates TCR-induced signaling, specifically by blocking NF-kappaB and NFAT promoter activities resulting in the loss of IL-2 secretion. The function may implicate its association with LCK proposed to impair phosphorylation of TCR subunits. In contrast, shown to activate TCR-induced signaling in T-cells probably implicating ZAP70, LCP2, LCK and FYN. Expressed on Treg cells can inhibit Th17 cell responses. Receptor for LGALS9. Binding to LGALS9 is believed to result in suppression of T-cell responses; the resulting apoptosis of antigen-specific cells may implicate HAVCR2 phosphorylation and disruption of its association with BAG6. Binding to LGALS9 is proposed to be involved in innate immune response to intracellular pathogens. Expressed on Th1 cells interacts with LGALS9 expressed on Mycobacterium tuberculosis-infected macrophages to stimulate antibactericidal activity including IL-1 beta secretion and to restrict intracellular bacterial growth. However, the function as receptor for LGALS9 has been challenged. Also reported to enhance CD8+ T cell responses to an acute infection such as by Listeria monocytogenes. Receptor for phosphatidylserine (PtSer); PtSer-binding is calcium-dependent. May recognize PtSer on apoptotic cells leading to their phagocytosis. Mediates the engulfment of apoptotic cells by dendritic cells. Expressed on T-cells, promotes conjugation but not engulfment of apoptotic cells. Expressed on dendritic cells (DCs) positively regulates innate immune response and in synergy with Toll-like receptors promotes secretion of TNF-alpha. In tumor-imfiltrating DCs suppresses nucleic acid-mediated innate immune repsonse by interaction with HMGB1 and interfering with nucleic acid-sensing and trafficking of nucleid acids to endosomes. Can enhance mast cell production of Th2 cytokines Il-4, IL-6 and IL-13. Expressed on natural killer (NK) cells acts as a coreceptor to enhance IFN-gamma production in response to LGALS9. In contrast, shown to suppress NK cell-mediated cytotoxicity. Negatively regulates NK cell function in LPS-induced endotoxic shock. The protein is Hepatitis A virus cellular receptor 2 homolog (Havcr2) of Rattus norvegicus (Rat).